Reading from the N-terminus, the 209-residue chain is J domain-containing protein spf31 (209 aa).

The region spanning 31–96 is the J domain; sequence NAYDVLDILP…KIRESLDSAY (66 aa). Disordered regions lie at residues 149–175 and 187–209; these read ANQQREQARQDEIARERKRRVESEKVW and QDFLHKTKKNNLKKKNKKPRVLG. Residues 154–175 are compositionally biased toward basic and acidic residues; the sequence is EQARQDEIARERKRRVESEKVW. The span at 192–209 shows a compositional bias: basic residues; sequence KTKKNNLKKKNKKPRVLG.

This is J domain-containing protein spf31 (spf31) from Schizosaccharomyces pombe (strain 972 / ATCC 24843) (Fission yeast).